A 115-amino-acid polypeptide reads, in one-letter code: NADH-ubiquinone oxidoreductase chain 3 (115 aa).

The next 3 membrane-spanning stretches (helical) occupy residues 4-24 (LMALMVNITLSILLITVAFWL), 55-75 (FFLVAITFLLYDLEIALLLPL), and 86-106 (TMMLTAFILVSVLALGLAYEW).

The protein belongs to the complex I subunit 3 family. As to quaternary structure, core subunit of respiratory chain NADH dehydrogenase (Complex I) which is composed of 45 different subunits. Interacts with TMEM186. Interacts with TMEM242.

The protein localises to the mitochondrion inner membrane. The enzyme catalyses a ubiquinone + NADH + 5 H(+)(in) = a ubiquinol + NAD(+) + 4 H(+)(out). In terms of biological role, core subunit of the mitochondrial membrane respiratory chain NADH dehydrogenase (Complex I) which catalyzes electron transfer from NADH through the respiratory chain, using ubiquinone as an electron acceptor. Essential for the catalytic activity of complex I. This is NADH-ubiquinone oxidoreductase chain 3 from Peromyscus gossypinus (Cotton deermouse).